A 379-amino-acid chain; its full sequence is Ascochitine biosynthesis cluster protein 8 (379 aa).

3 helical membrane passes run 87–107 (ELIA…LDLE), 116–136 (VGPV…VAAC), and 141–161 (IKVF…VVAL).

It localises to the membrane. It functions in the pathway mycotoxin biosynthesis. In terms of biological role, part of the gene cluster that mediates the biosynthesis of the selective antifungal agent ascochitine, an o-quinone methide that plays a possible protective role against other microbial competitors in nature and is considered to be important for pathogenicity of legume-associated Didymella species. The pathway probably begins with the synthesis of a keto-aldehyde intermediate by the ascochitine non-reducing polyketide synthase pksAC from successive condensations of 4 malonyl-CoA units, presumably with a simple acetyl-CoA starter unit. Release of the keto-aldehyde intermediate is consistent with the presence of the C-terminal reductive release domain. The HR-PKS (orf7) probably makes a diketide starter unit which is passed to the non-reducing polyketide synthase pksAC for further extension, producing ascochital and ascochitine. The aldehyde dehydrogenase (orf1), the 2-oxoglutarate-dependent dioxygenase (orf3) and the dehydrogenase (orf9) are probably involved in subsequent oxidations of methyl groups to the carboxylic acid of the heterocyclic ring. The ascochitine gene cluster also includes a gene encoding a short peptide with a cupin domain (orf2) that is often found in secondary metabolite gene clusters and which function has still to be determined. The polypeptide is Ascochitine biosynthesis cluster protein 8 (Didymella fabae (Leaf and pod spot disease fungus)).